The sequence spans 274 residues: 3-methyl-2-oxobutanoate hydroxymethyltransferase (274 aa).

Residues D50 and D89 each coordinate Mg(2+). 3-methyl-2-oxobutanoate-binding positions include 50–51 (DS), D89, and K119. Residue E121 coordinates Mg(2+). Residue E188 is the Proton acceptor of the active site.

Belongs to the PanB family. As to quaternary structure, homodecamer; pentamer of dimers. The cofactor is Mg(2+).

Its subcellular location is the cytoplasm. It carries out the reaction 3-methyl-2-oxobutanoate + (6R)-5,10-methylene-5,6,7,8-tetrahydrofolate + H2O = 2-dehydropantoate + (6S)-5,6,7,8-tetrahydrofolate. It functions in the pathway cofactor biosynthesis; (R)-pantothenate biosynthesis; (R)-pantoate from 3-methyl-2-oxobutanoate: step 1/2. Its function is as follows. Catalyzes the reversible reaction in which hydroxymethyl group from 5,10-methylenetetrahydrofolate is transferred onto alpha-ketoisovalerate to form ketopantoate. This Methylorubrum extorquens (strain PA1) (Methylobacterium extorquens) protein is 3-methyl-2-oxobutanoate hydroxymethyltransferase.